The following is a 124-amino-acid chain: Cytochrome c2 (124 aa).

Position 1 is a pyrrolidone carboxylic acid (Gln-1). The heme c site is built by Cys-16, Cys-19, His-20, and Met-85.

The protein belongs to the cytochrome c family. In terms of processing, binds 1 heme c group covalently per subunit.

The protein localises to the periplasm. Functionally, cytochrome c2 is found mainly in purple, non-sulfur, photosynthetic bacteria where it functions as the electron donor to the oxidized bacteriochlorophyll in the photophosphorylation pathway. However, it may also have a role in the respiratory chain and is found in some non-photosynthetic bacteria. The sequence is that of Cytochrome c2 from Afifella marina (Rhodobium marinum).